The following is a 647-amino-acid chain: MMSLNSSSVVKSSISGVSWTQSQSVRLSVRRPMVVAMVNSNGRPERSVGVSVDGAVKDVNAPVAVEVADSESKKPTAVVGGGVEDVYGEDSATEDHFITPWSVSVASGYSLLRDPHHNKGLAFTEKERDAHYLRGLLPPVVVNHDLQVKKMMHNIRQYEVPLQRYQAMMDLQERNERLFYKLLIENIEELLPIVYTPTVGEACQKYGTIFKNPQGLYISLKDKGKVLEILKNWPQKKIQVIVVTDGERILGLGDLGCQGMGIPVGKLSLYTALGGIRPSACLPITIDVGTNNEKMLNDEFYIGLRQRRASGKEYAELMNEFMSAVKQNYGEKVLIQFEDFANHNAFDLLEKYRTTHLVFNDDIQGTASVVLAGLISALKLVGGSLADHKFLFLGAGEAGTGIAELIALEISKQTNAPLEETRKKIWLVDSKGLIVRSRLDSLQHFKKPWAHDHEPVNKFLDAVKAIKPTVLIGSSGAGQTFTKEVVEAMSSFNEKPIILALSNPTSQSECTAEQAYTWSEGRTIFASGSPFAPVEYNGKVYVSGQSNNAYIFPGFGLGLIISGAIRVHDEMLLAASEALAEQVTQEHFDNGLIYPPFTNIRKISAHIAAKVAAKAYELGLASRLPQPENLVAYAESCMYSPKYRNYR.

The N-terminal 61 residues, 1-61 (MMSLNSSSVV…VDGAVKDVNA (61 aa)), are a transit peptide targeting the chloroplast. The active-site Proton donor is the Y195. R248 provides a ligand contact to NAD(+). The active-site Proton acceptor is K266. A divalent metal cation contacts are provided by E338, D339, and D362. An NAD(+)-binding site is contributed by D362. 391–407 (LFLGAGEAGTGIAELIA) is an NADP(+) binding site. Residue N503 coordinates NAD(+).

The protein belongs to the malic enzymes family. Homotetramer. Requires Mg(2+) as cofactor. Mn(2+) is required as a cofactor.

The protein resides in the plastid. It localises to the chloroplast. The enzyme catalyses (S)-malate + NADP(+) = pyruvate + CO2 + NADPH. It catalyses the reaction oxaloacetate + H(+) = pyruvate + CO2. It functions in the pathway photosynthesis; C3 acid pathway. The chloroplastic ME isoform decarboxylates malate shuttled from neighboring mesophyll cells. The CO(2) released is then refixed by ribulose-bisphosphate carboxylase. This pathway eliminates the photorespiratory loss of CO(2) that occurs in most plants. The chain is NADP-dependent malic enzyme, chloroplastic (MODA) from Flaveria pringlei.